The following is a 374-amino-acid chain: MENSQLVSITFLAYTIIISIGSINCIDNNNLVTNQSALFVFGDSVFDAGNNNYIDTLSSVRSNYWPYGQTTFKSPTGRVSDGRLIPDFIAEYAWLPLIPPNLQPFNGNSQFAYGVNFASGGAGALVGTFSGLVINLRTQLNNFKKVEEMLRSKLGDAEGKRVISRAVYLFHIGLNDYQYPFTTNSSLFQSISNEKYVDYVVGNMTDVFKEVYNLGGRKFGILNTGPYDCAPASLVIDQTKIRSCFQPVTELINMHNEKLLNGLRRLNHELSGFKYALHDYHTSLSERMNDPSKYGFKEGKKACCGSGPLRGINTCGGRMGLSQSYELCENVTDYLFFDPFHLTEKANRQIAELIWSGPTNITGPYNLKALFELN.

A signal peptide spans 1–25; that stretch reads MENSQLVSITFLAYTIIISIGSINC. Asparagine 34 carries N-linked (GlcNAc...) asparagine glycosylation. Catalysis depends on serine 44, which acts as the Nucleophile. Residues asparagine 184, asparagine 203, and asparagine 330 are each glycosylated (N-linked (GlcNAc...) asparagine). Residues aspartate 338 and histidine 341 each act as charge relay system in the active site. Asparagine 360 carries N-linked (GlcNAc...) asparagine glycosylation.

The protein belongs to the 'GDSL' lipolytic enzyme family.

The protein localises to the secreted. Functionally, confers resistance to the necrotrophic fungus Alternaria brassicicola. Possesses lipase and antimicrobial activities that directly disrupt fungal spore integrity. Triggers systemic resistance, mostly by the ethylene-dependent pathway. In Arabidopsis thaliana (Mouse-ear cress), this protein is GDSL esterase/lipase 1.